Here is an 872-residue protein sequence, read N- to C-terminus: DNA mismatch repair protein MutS (872 aa).

622–629 (GPNMAGKS) is a binding site for ATP.

Belongs to the DNA mismatch repair MutS family.

Its function is as follows. This protein is involved in the repair of mismatches in DNA. It is possible that it carries out the mismatch recognition step. This protein has a weak ATPase activity. This Geotalea uraniireducens (strain Rf4) (Geobacter uraniireducens) protein is DNA mismatch repair protein MutS.